A 271-amino-acid polypeptide reads, in one-letter code: Phosphate import ATP-binding protein PstB (271 aa).

One can recognise an ABC transporter domain in the interval 24-266 (MIGNDVSVYY…PDDQRTQDYI (243 aa)). Position 56-63 (56-63 (GPSGCGKS)) interacts with ATP.

It belongs to the ABC transporter superfamily. Phosphate importer (TC 3.A.1.7) family. In terms of assembly, the complex is composed of two ATP-binding proteins (PstB), two transmembrane proteins (PstC and PstA) and a solute-binding protein (PstS).

The protein localises to the cell inner membrane. The catalysed reaction is phosphate(out) + ATP + H2O = ADP + 2 phosphate(in) + H(+). In terms of biological role, part of the ABC transporter complex PstSACB involved in phosphate import. Responsible for energy coupling to the transport system. The polypeptide is Phosphate import ATP-binding protein PstB (Rhizobium meliloti (strain 1021) (Ensifer meliloti)).